Reading from the N-terminus, the 362-residue chain is Chalcone synthase A (362 aa).

The active site involves cysteine 168.

This sequence belongs to the thiolase-like superfamily. Chalcone/stilbene synthases family.

It carries out the reaction (E)-4-coumaroyl-CoA + 3 malonyl-CoA + 3 H(+) = 2',4,4',6'-tetrahydroxychalcone + 3 CO2 + 4 CoA. It functions in the pathway secondary metabolite biosynthesis; flavonoid biosynthesis. Its function is as follows. The primary product of this enzyme is 4,2',4',6'-tetrahydroxychalcone (also termed naringenin-chalcone or chalcone) which can under specific conditions spontaneously isomerize into naringenin. This chain is Chalcone synthase A (CHSA), found in Ipomoea triloba (Trilobed morning glory).